Reading from the N-terminus, the 296-residue chain is MAAVSSVASLRGADYENGLRGVAGPSDGGQDPGEDDPMGRGTLDLEMELLEQGRRSRRVGGRTTPGRRSGGRGGSGGGGAGGLEELEDEELEEEEPGELTGDQTIEDPELEAIKARVREMEEEAEKLKELQNEVEKQMNMSPPPGNAGPVIMSVEEKMEADARSIYVGNVDYGATAEELEAHFHGCGSVNRVTILCDKFTGHPKGFAYIEFCDKESVRTSLALDESLFRGRQIKVVPKRTNRPGISTTDRGFPRARYRARASSYSSRSRFYSGYTPRPRGRVYRGRARATSWYTPY.

A disordered region spans residues 1-106; it reads MAAVSSVASL…GELTGDQTIE (106 aa). Over residues 71–82 the composition is skewed to gly residues; it reads GRGGSGGGGAGG. Residues 84–97 are compositionally biased toward acidic residues; the sequence is EELEDEELEEEEPG. Positions 107–141 form a coiled coil; it reads DPELEAIKARVREMEEEAEKLKELQNEVEKQMNMS. A necessary for homooligomerization region spans residues 146–296; the sequence is NAGPVIMSVE…ARATSWYTPY (151 aa). Residues 163–240 form the RRM domain; sequence RSIYVGNVDY…RQIKVVPKRT (78 aa).

Monomer and homooligomer. Binds RNA as a monomer and oligomerizes when bound to poly(A). In terms of tissue distribution, shows dynamic spatial expression throughout development. First expressed in the animal pole region of the egg and this pattern persists through to the blastula stage. In gastrula and neurula embryos, expressed mainly in ectodermal, neural and epidermal regions. Neural tissue-specific expression pattern persists into tailbud stage when expression is localized to the brain and spinal cord. At early tadpole stage, expression becomes gradually confined to the specific vesicle regions of the developing brain. At stage 39, expressed in the telencephalon and mesencephalon regions of the brain. Also detected in the eye and olfactory pit at the tadpole stage. Expressed during gut endoderm development. At stage 35, expressed exclusively in the anterior portion of the gut endoderm, which includes the prospective liver, stomach and pancreas. As development proceeds, expression becomes restricted to the pancreas, and by stage 46/47 (the seventh day of development) expression is localized exclusively to the pancreas. Expressed in most adult tissues.

The protein resides in the nucleus. It is found in the cytoplasm. Its function is as follows. Involved in the 3'-end formation of mRNA precursors (pre-mRNA) by the addition of a poly(A) tail of 200-250 nt to the upstream cleavage product. Stimulates poly(A) polymerase (PAPOLA) conferring processivity on the poly(A) tail elongation reaction and also controls the poly(A) tail length. Increases the affinity of poly(A) polymerase for RNA. Binds to poly(A) and to poly(G) with high affinity. May protect the poly(A) tail from degradation. The sequence is that of Polyadenylate-binding protein 2-A (pabpn1-a) from Xenopus laevis (African clawed frog).